Here is a 425-residue protein sequence, read N- to C-terminus: MYNGIGLQTARGSGTNGYVQSNLSHLMQARRKIEYNGEDDLRKMEAELNRKPNEEIMDHNRKRQIEVKCTEFEMLLEDKGLDDEDIERKVGEYRKNLLKQLESGELNVDEELSTKESHARRRAAANNRDKMRNALGLGEDYVPGSSMAKMNKSDVVGAAMESELPQKDDKEKLLETLRLHRKSKKKQESSSSSSSSSSSSESSSEDEKHRKDRKKKEKKQKLKEMEKRREKLRQKERELLAVSDKVKKEEPAESSDEEDSRKDQRKPREDRRRSVERQDQREDRRDRRRSPEDPRERRRSPEDRTVRRRSPERRRQQRSPSVERRKSPQRRDERRRRHDSSENERRSTATASKKSRMDELEVKQEPPSDSEDYIAKTNLAPIRVEKSAEKVEKSRKSSSESSSGSSDSDSSSDSSSSSDSSSDSE.

The CWF21 domain occupies 57–100; it reads MDHNRKRQIEVKCTEFEMLLEDKGLDDEDIERKVGEYRKNLLKQ. Disordered regions lie at residues 109-131 and 161-425; these read DEEL…RDKM and ESEL…SDSE. Positions 164 to 178 are enriched in basic and acidic residues; that stretch reads LPQKDDKEKLLETLR. A compositionally biased stretch (low complexity) spans 189–202; the sequence is SSSSSSSSSSSSES. The span at 210 to 221 shows a compositional bias: basic residues; sequence RKDRKKKEKKQK. 2 stretches are compositionally biased toward basic and acidic residues: residues 222–251 and 259–305; these read LKEM…KEEP and DSRK…EDRT. Over residues 306 to 317 the composition is skewed to basic residues; sequence VRRRSPERRRQQ. Basic and acidic residues-rich tracts occupy residues 321-332, 355-366, and 383-398; these read SVERRKSPQRRD, SRMDELEVKQEP, and RVEK…RKSS. The segment covering 399-425 has biased composition (low complexity); it reads SESSSGSSDSDSSSDSSSSSDSSSDSE.

Belongs to the CWC21 family. As to quaternary structure, interacts with RNA polymerase II subunit ama-1, binding to both hyperphosphorylated and hypophosphorylated forms, but more strongly when ama-1 is phosphorylated at 'Ser-5' of the C-terminal heptapeptide repeat. Interacts with pre-mRNA-processing factor prp-19. May also interact with pre-mRNA-splicing factor 8 homolog prp-8. Expressed in the proximal germline, but not in the most distal part where mitosis takes place. May be expressed ubiquitously in somatic cells.

Its subcellular location is the nucleus. It localises to the chromosome. The protein resides in the nuclear body. In terms of biological role, plays a role in pre-mRNA splicing as component of the spliceosome. Involved in modulating global transcription, probably acting via interaction with RNA polymerase II. Influences the chromatin distribution and phosphorylation state of RNA polymerase II subunit ama-1. Involved in regulating the germline sex determination pathway. The protein is SRRM2 protein homolog rsr-2 of Caenorhabditis elegans.